The chain runs to 401 residues: S-adenosylmethionine synthase (401 aa).

136-141 (GTGSSD) contacts ATP. Positions 278-305 (GDDGSVGRGNRSNGLITPSRPMSMEATS) are disordered.

It belongs to the AdoMet synthase 2 family. It depends on Mg(2+) as a cofactor.

The catalysed reaction is L-methionine + ATP + H2O = S-adenosyl-L-methionine + phosphate + diphosphate. Its pathway is amino-acid biosynthesis; S-adenosyl-L-methionine biosynthesis; S-adenosyl-L-methionine from L-methionine: step 1/1. In terms of biological role, catalyzes the formation of S-adenosylmethionine from methionine and ATP. In Methanococcoides burtonii (strain DSM 6242 / NBRC 107633 / OCM 468 / ACE-M), this protein is S-adenosylmethionine synthase.